A 590-amino-acid polypeptide reads, in one-letter code: Laccase-19 (590 aa).

A signal peptide spans 1 to 28; sequence MEKLSMVTSLLCAITVAVLAVAVVSGEA. 2 consecutive Plastocyanin-like domains span residues 36–152 and 161–315; these read VVHE…PRDG and KDVP…YAGT. N-linked (GlcNAc...) asparagine glycosylation is found at Asn-41 and Asn-47. The Cu cation site is built by His-86 and His-88. A glycan (N-linked (GlcNAc...) asparagine) is linked at Asn-120. Cu cation contacts are provided by His-131 and His-133. Residues Asn-205, Asn-344, Asn-378, Asn-397, Asn-434, and Asn-465 are each glycosylated (N-linked (GlcNAc...) asparagine). The Plastocyanin-like 3 domain occupies 424-566; the sequence is DFPIRPPRPF…ATAFIVEDGP (143 aa). Positions 483, 486, 488, 545, 546, 547, 551, and 556 each coordinate Cu cation. Residues 565–590 are disordered; that stretch reads GPTPETSLPPPPPEFKRCGNNGLSQP.

Belongs to the multicopper oxidase family. Cu cation is required as a cofactor.

The protein resides in the secreted. It localises to the extracellular space. The protein localises to the apoplast. It carries out the reaction 4 hydroquinone + O2 = 4 benzosemiquinone + 2 H2O. Functionally, lignin degradation and detoxification of lignin-derived products. The sequence is that of Laccase-19 (LAC19) from Oryza sativa subsp. japonica (Rice).